The following is a 597-amino-acid chain: Arginine--tRNA ligase (597 aa).

Positions 23-32 (QAAAARQASQ) are enriched in low complexity. The segment at 23–43 (QAAAARQASQPLDPQLAPASK) is disordered. Positions 137 to 147 (PNIAKEMHVGH) match the 'HIGH' region motif.

This sequence belongs to the class-I aminoacyl-tRNA synthetase family. As to quaternary structure, monomer.

It is found in the cytoplasm. It catalyses the reaction tRNA(Arg) + L-arginine + ATP = L-arginyl-tRNA(Arg) + AMP + diphosphate. The polypeptide is Arginine--tRNA ligase (Synechococcus sp. (strain WH7803)).